Here is a 383-residue protein sequence, read N- to C-terminus: MATASPPFISTLSFTHSSFKTSSSSSFSPKLLRPLLSFSVKASRKQVEIVFDPDERLNKIGDDVDKEAPLSRLKLFSPCKINVFLRITGKREDGFHDLASLFHVISLGDTIKFSLSPSKSKDRLSTNVQGVPVDGRNLIIKALNLYRKKTGSNRFFWIHLDKKVPTGAGLGGGSSNAATALWAANELNGGLVTENELQDWSSEIGSDIPFFFSHGAAYCTGRGEIVQDLPPPFPLDLPMVLIKPREACSTAEVYKRLRLDQTSNINPLTLLENVTSNGVSQSICVNDLEPPAFSVLPSLKRLKQRIIASGRGEYDAVFMSGSGSTIIGIGSPDPPQFIYDDEEYKNVFLSEANFMTREANEWYKEPASANATTSSAESRMDFQ.

A chloroplast-targeting transit peptide spans 1-72 (MATASPPFIS…DVDKEAPLSR (72 aa)). 165-175 (PTGAGLGGGSS) contacts ATP.

Belongs to the GHMP kinase family. IspE subfamily. In terms of tissue distribution, expressed in leaves, stems, flowers and siliques.

Its subcellular location is the plastid. It localises to the chloroplast stroma. It carries out the reaction 4-CDP-2-C-methyl-D-erythritol + ATP = 4-CDP-2-C-methyl-D-erythritol 2-phosphate + ADP + H(+). It participates in isoprenoid biosynthesis; isopentenyl diphosphate biosynthesis via DXP pathway; isopentenyl diphosphate from 1-deoxy-D-xylulose 5-phosphate: step 3/6. Functionally, enzyme of the plastid non-mevalonate pathway for isoprenoid biosynthesis that catalyzes the phosphorylation of the position 2 hydroxy group of 4-diphosphocytidyl-2C-methyl-D-erythritol. Is essential for chloroplast development. This is 4-diphosphocytidyl-2-C-methyl-D-erythritol kinase, chloroplastic (ISPE) from Arabidopsis thaliana (Mouse-ear cress).